Consider the following 745-residue polypeptide: Double-stranded RNA-specific editase B2 (745 aa).

2 disordered regions span residues 1–35 and 50–104; these read MASV…RKDK and SPGT…PLEE. The span at 20 to 34 shows a compositional bias: basic residues; that stretch reads CKSKRRRRRRSKRKD. The R-domain (ssRNA-binding) stretch occupies residues 23-35; sequence KRRRRRRSKRKDK. 2 DRBM domains span residues 125 to 191 and 283 to 347; these read TPKN…SFVQ and NPVV…ALFD. In terms of domain architecture, A to I editase spans 414 to 741; the sequence is VLSSGTKCIS…VRKPPEQDQF (328 aa). H438 contacts Zn(2+). E440 functions as the Proton donor in the catalytic mechanism. Zn(2+) contacts are provided by C496 and C561.

Brain specific.

It is found in the nucleus. In terms of biological role, lacks editing activity. It prevents the binding of other ADAR enzymes to targets in vitro, and decreases the efficiency of these enzymes. Capable of binding to dsRNA but also to ssRNA. This is Double-stranded RNA-specific editase B2 (Adarb2) from Mus musculus (Mouse).